Consider the following 186-residue polypeptide: Elongation factor P (186 aa).

It belongs to the elongation factor P family.

Its subcellular location is the cytoplasm. Its pathway is protein biosynthesis; polypeptide chain elongation. Functionally, involved in peptide bond synthesis. Stimulates efficient translation and peptide-bond synthesis on native or reconstituted 70S ribosomes in vitro. Probably functions indirectly by altering the affinity of the ribosome for aminoacyl-tRNA, thus increasing their reactivity as acceptors for peptidyl transferase. The sequence is that of Elongation factor P from Polynucleobacter necessarius subsp. necessarius (strain STIR1).